The sequence spans 391 residues: Terminal nucleotidyltransferase 5C (391 aa).

It belongs to the TENT family. In terms of assembly, interacts with BCCIP and PABPC1; the interaction has no effect on TENT5C poly(A) polymerase function. Interacts with PLK4; this interaction leads to the TENT5C recruitment into the centrosome.

Its subcellular location is the nucleus. It is found in the cytoplasm. The protein localises to the cytoskeleton. The protein resides in the microtubule organizing center. It localises to the centrosome. The enzyme catalyses RNA(n) + ATP = RNA(n)-3'-adenine ribonucleotide + diphosphate. Functionally, catalyzes the transfer of one adenosine molecule from an ATP to an mRNA poly(A) tail bearing a 3'-OH terminal group and enhances mRNA stability and gene expression. Can also elongate RNA oligos ending with uridine molecule, provided that the sequence is adenosine-rich. Mainly targets mRNAs encoding endoplasmic reticulum-targeted protein. In terms of biological role, (Microbial infection) Seems to enhance replication of some viruses, including yellow fever virus, in response to type I interferon. This Homo sapiens (Human) protein is Terminal nucleotidyltransferase 5C.